The primary structure comprises 466 residues: MSKLRVRFAPSPTGYLHIGGARTALFNFLLARKEQGTFVLRIEDTDVARSTQESVDAILQAMDWLGMSCDEGPIYQSDRFDLYRAKIDQLVEQGKAYRCYCTAEELEKKREAAMQDGRKPKYDGTCRQLQEVCDDKPYVIRFKAPQEGATTFHDRIKGDITFQNEELDDLIIQRTDGTPTYNFVVVVDDAEMGINLVLRGDDHINNTPRQIMLYKALGYPVPDFAHVPMILGADKSRLSKRHGATSVMAYKEMGYLPEALVNYLVRLGWSHGDQEIFTQDELTQLFSLDNIGKSASVFNPEKLIWLNSHYIKTGNPGRLAQLLAGHLAADGIDVANIADLEPIVVALQDRSKTLVDMAQQARCFFADDIQFDEKAAAKFLIEDNRFVFEALSAALESCDDWKEDILDGVFKGVLEATGLKFGKLAQPARVALVGGTTGPSICLIMQILGREKTLARLQGAMSRLGQ.

Residues 10-20 (PSPTGYLHIGG) carry the 'HIGH' region motif. A 'KMSKS' region motif is present at residues 237 to 241 (RLSKR). Lysine 240 lines the ATP pocket.

It belongs to the class-I aminoacyl-tRNA synthetase family. Glutamate--tRNA ligase type 1 subfamily. As to quaternary structure, monomer.

The protein resides in the cytoplasm. It catalyses the reaction tRNA(Glu) + L-glutamate + ATP = L-glutamyl-tRNA(Glu) + AMP + diphosphate. Catalyzes the attachment of glutamate to tRNA(Glu) in a two-step reaction: glutamate is first activated by ATP to form Glu-AMP and then transferred to the acceptor end of tRNA(Glu). The sequence is that of Glutamate--tRNA ligase from Syntrophotalea carbinolica (strain DSM 2380 / NBRC 103641 / GraBd1) (Pelobacter carbinolicus).